We begin with the raw amino-acid sequence, 631 residues long: Transcription factor dibT (631 aa).

Positions 11–38 (CWTCRLRRKRCDSVQPVCGSCQSLEITC) form a DNA-binding region, zn(2)-C6 fungal-type. Positions 123–144 (SLADSSASTPSTSSGRPTTLRS) are enriched in low complexity. Disordered regions lie at residues 123-148 (SLADSSASTPSTSSGRPTTLRSSVDR) and 469-488 (GLKDLDTSPPSPQPTKTSAG).

It localises to the nucleus. Transcription factor; part of the gene cluster that mediates the biosynthesis of pestalotiollide B which is part of dibenzodioxocinones, a novel class of inhibitors against cholesterol ester transfer protein (CEPT). Acts as the key transcription factor within the cluster and positively regulates the expression of the cluster genes and the subsequent production of dibenzodioxocinones such as pestalotiollide B, pestalotiollide C, 1',2'-dehydropenicillide, 3'-methoxy-1',2'-dehydropenicillide and 1',2'-epoxy-3',4'-didehydropenicillide. Required for the expression of most PKS genes outside of the dibenzodioxocinones cluster, (43 out of 48 defined PKS genes), and promotes pigmentation of the mycelium and conidia. The protein is Transcription factor dibT of Pestalotiopsis microspora.